We begin with the raw amino-acid sequence, 2070 residues long: HEAT repeat-containing protein 5B (2070 aa).

3 HEAT repeats span residues 848–885, 1062–1099, and 1290–1327; these read EVRK…VVGE, VNLS…REAA, and LHLS…KFAS. Phosphoserine is present on serine 1737.

It belongs to the HEATR5 family. As to quaternary structure, self-associates. Component of the aftiphilin/p200/gamma-synergin complex, at least composed of AFTPH/aftiphilin, HEATR5B/p200a and SYNRG/gamma-synergin, which plays a role in the AP1G1/AP-1-mediated protein trafficking from early to recycling endosomes and between the trans-Golgi network (TGN) and endosomes. Within the complex interacts with AFTPH/aftiphilin and SYNRG/gamma-synergin; the interactions are direct. Interacts with GGA1.

It is found in the cytoplasm. It localises to the perinuclear region. The protein localises to the cytoplasmic vesicle. The protein resides in the clathrin-coated vesicle. Its function is as follows. Component of clathrin-coated vesicles. Component of the aftiphilin/p200/gamma-synergin complex, which plays roles in AP1G1/AP-1-mediated protein trafficking including the trafficking of transferrin from early to recycling endosomes, and the membrane trafficking of furin and the lysosomal enzyme cathepsin D between the trans-Golgi network (TGN) and endosomes. The polypeptide is HEAT repeat-containing protein 5B (Heatr5b) (Mus musculus (Mouse)).